The following is a 201-amino-acid chain: Proteasome subunit beta type-2 (201 aa).

N-acetylmethionine is present on M1.

This sequence belongs to the peptidase T1B family. As to quaternary structure, the 26S proteasome consists of a 20S proteasome core and two 19S regulatory subunits. The 20S proteasome core is a barrel-shaped complex made of 28 subunits that are arranged in four stacked rings. The two outer rings are each formed by seven alpha subunits, and the two inner rings are formed by seven beta subunits. The proteolytic activity is exerted by three beta-subunits PSMB5, PSMB6 and PSMB7.

Its subcellular location is the cytoplasm. The protein localises to the nucleus. In terms of biological role, non-catalytic component of the 20S core proteasome complex involved in the proteolytic degradation of most intracellular proteins. This complex plays numerous essential roles within the cell by associating with different regulatory particles. Associated with two 19S regulatory particles, forms the 26S proteasome and thus participates in the ATP-dependent degradation of ubiquitinated proteins. The 26S proteasome plays a key role in the maintenance of protein homeostasis by removing misfolded or damaged proteins that could impair cellular functions, and by removing proteins whose functions are no longer required. Associated with the PA200 or PA28, the 20S proteasome mediates ubiquitin-independent protein degradation. This type of proteolysis is required in several pathways including spermatogenesis (20S-PA200 complex) or generation of a subset of MHC class I-presented antigenic peptides (20S-PA28 complex). This chain is Proteasome subunit beta type-2 (PSMB2), found in Bos taurus (Bovine).